The sequence spans 198 residues: Ion-translocating oxidoreductase complex subunit B (198 aa).

Residues 1-28 (MIITTVYFILVAIAVLALIFGAILGFAS) form a hydrophobic region. In terms of domain architecture, 4Fe-4S spans 34-92 (EADPIVEKIDALLPQSQCGQCGYPGCKPYAEAIANGDDITKCIPGGQTVIVNIAELMGV). [4Fe-4S] cluster-binding residues include Cys51, Cys54, Cys59, Cys75, Cys115, Cys118, Cys121, Cys125, Cys145, Cys148, Cys151, and Cys155. 4Fe-4S ferredoxin-type domains are found at residues 106–135 (MVAF…GTNK) and 136–165 (AMHT…MIKV).

It belongs to the 4Fe4S bacterial-type ferredoxin family. RnfB subfamily. The complex is composed of six subunits: RnfA, RnfB, RnfC, RnfD, RnfE and RnfG. It depends on [4Fe-4S] cluster as a cofactor.

Its subcellular location is the cell inner membrane. Functionally, part of a membrane-bound complex that couples electron transfer with translocation of ions across the membrane. The protein is Ion-translocating oxidoreductase complex subunit B of Pasteurella multocida (strain Pm70).